Reading from the N-terminus, the 318-residue chain is Olfactory receptor 5G26 (318 aa).

The Extracellular portion of the chain corresponds to 1–28; sequence MMHRNQTVVTEFFFTGLTSSFHLQIVLF. The N-linked (GlcNAc...) asparagine glycan is linked to N5. A helical transmembrane segment spans residues 29–49; that stretch reads LTFLCVYLATLLGNLGMIILI. Topologically, residues 50–56 are cytoplasmic; sequence HLDTRLH. Residues 57 to 77 form a helical membrane-spanning segment; the sequence is IPMYFFLSHLSFVDACSSSVI. At 78–93 the chain is on the extracellular side; it reads SPKMLSDMFVDKKVIS. The helical transmembrane segment at 94-114 threads the bilayer; sequence FLGCAIQLCLFSQFVVTECFL. The cysteines at positions 97 and 189 are disulfide-linked. Over 115-144 the chain is Cytoplasmic; that stretch reads LASMAYDRYVAICKPLLYTLIMSQRVCVQL. The chain crosses the membrane as a helical span at residues 145–165; that stretch reads VIGPYSIGFVSTMVHIISAFV. Topologically, residues 166 to 198 are extracellular; the sequence is LPYCGPNLINHFFCDLLPVLSLACANTQMKKRL. A helical transmembrane segment spans residues 199–219; the sequence is LFIVAGILGVFSGIIILVSYV. Residues 220–239 are Cytoplasmic-facing; it reads YIAITILKISSADGRRKAFS. A helical transmembrane segment spans residues 240-260; it reads TCSSHLTAVSILYGTLFFIYV. The Extracellular segment spans residues 261 to 271; that stretch reads RPSSSFSLDIN. The helical transmembrane segment at 272 to 292 threads the bilayer; that stretch reads KVVSLFYTTVIPMLNPFIYSL. The Cytoplasmic segment spans residues 293-318; it reads RNKEVKDALIRTFEKQFCYSFQDKIL.

Belongs to the G-protein coupled receptor 1 family.

It localises to the cell membrane. Its function is as follows. Potential odorant receptor. This chain is Olfactory receptor 5G26, found in Mus musculus (Mouse).